The primary structure comprises 299 residues: ATP phosphoribosyltransferase (299 aa).

This sequence belongs to the ATP phosphoribosyltransferase family. Long subfamily. Equilibrium between an active dimeric form, an inactive hexameric form and higher aggregates. Interconversion between the various forms is largely reversible and is influenced by the natural substrates and inhibitors of the enzyme. Mg(2+) is required as a cofactor.

It localises to the cytoplasm. It catalyses the reaction 1-(5-phospho-beta-D-ribosyl)-ATP + diphosphate = 5-phospho-alpha-D-ribose 1-diphosphate + ATP. It participates in amino-acid biosynthesis; L-histidine biosynthesis; L-histidine from 5-phospho-alpha-D-ribose 1-diphosphate: step 1/9. Feedback inhibited by histidine. Functionally, catalyzes the condensation of ATP and 5-phosphoribose 1-diphosphate to form N'-(5'-phosphoribosyl)-ATP (PR-ATP). Has a crucial role in the pathway because the rate of histidine biosynthesis seems to be controlled primarily by regulation of HisG enzymatic activity. This Escherichia coli O7:K1 (strain IAI39 / ExPEC) protein is ATP phosphoribosyltransferase.